The chain runs to 337 residues: RNA 3'-terminal phosphate cyclase (337 aa).

ATP contacts are provided by residues glutamine 100 and 281–285 (YMGDQ). Histidine 306 (tele-AMP-histidine intermediate) is an active-site residue.

The protein belongs to the RNA 3'-terminal cyclase family. Type 1 subfamily.

The protein resides in the cytoplasm. It carries out the reaction a 3'-end 3'-phospho-ribonucleotide-RNA + ATP = a 3'-end 2',3'-cyclophospho-ribonucleotide-RNA + AMP + diphosphate. In terms of biological role, catalyzes the conversion of 3'-phosphate to a 2',3'-cyclic phosphodiester at the end of RNA. The mechanism of action of the enzyme occurs in 3 steps: (A) adenylation of the enzyme by ATP; (B) transfer of adenylate to an RNA-N3'P to produce RNA-N3'PP5'A; (C) and attack of the adjacent 2'-hydroxyl on the 3'-phosphorus in the diester linkage to produce the cyclic end product. The biological role of this enzyme is unknown but it is likely to function in some aspects of cellular RNA processing. The chain is RNA 3'-terminal phosphate cyclase (rtcA) from Methanothermobacter thermautotrophicus (strain ATCC 29096 / DSM 1053 / JCM 10044 / NBRC 100330 / Delta H) (Methanobacterium thermoautotrophicum).